A 117-amino-acid polypeptide reads, in one-letter code: Large ribosomal subunit protein bL19 (117 aa).

This sequence belongs to the bacterial ribosomal protein bL19 family.

In terms of biological role, this protein is located at the 30S-50S ribosomal subunit interface and may play a role in the structure and function of the aminoacyl-tRNA binding site. This chain is Large ribosomal subunit protein bL19, found in Shewanella amazonensis (strain ATCC BAA-1098 / SB2B).